We begin with the raw amino-acid sequence, 341 residues long: Cysteine and histidine-rich domain-containing protein 1 (341 aa).

Positions 5, 10, 24, 27, 42, 43, 59, 64, 155, 160, 174, 177, 192, 193, 209, and 214 each coordinate Zn(2+). 2 consecutive CHORD domains span residues 5-64 (CYNK…KGPH) and 155-214 (CKNG…RGKH). Residues 61-81 (KGPHNQEKPAEPVKPEVKSSL) are disordered. The segment covering 64-81 (HNQEKPAEPVKPEVKSSL) has biased composition (basic and acidic residues). In terms of domain architecture, CS spans 225–314 (VVPCRFDWHQ…AEPMSWARLD (90 aa)). Positions 313-341 (LDLPPVAPPKEKEKEKDVDSEDECDDDED) are disordered. The segment covering 330–341 (VDSEDECDDDED) has biased composition (acidic residues).

Functionally, regulates centrosome duplication. The chain is Cysteine and histidine-rich domain-containing protein 1 (chordc1) from Danio rerio (Zebrafish).